Here is a 1078-residue protein sequence, read N- to C-terminus: Cell wall acid trehalase ATC1 (1078 aa).

Positions 1–54 (MAANSSFFLADNCAPHNQSFIQFCIHAASKKKGRIALMCLANLFLLFSFHLLYA) are cleaved as a signal peptide. Residues Asn-4, Asn-17, Asn-150, Asn-184, Asn-242, Asn-287, Asn-301, and Asn-350 are each glycosylated (N-linked (GlcNAc...) asparagine). 478-479 (WD) contacts substrate. N-linked (GlcNAc...) asparagine glycans are attached at residues Asn-532, Asn-591, and Asn-601. The Proton donor role is filled by Glu-607. N-linked (GlcNAc...) asparagine glycosylation is found at Asn-661 and Asn-670. 676-677 (KQ) is a substrate binding site. Asn-829, Asn-837, Asn-904, Asn-922, Asn-931, Asn-946, Asn-1003, and Asn-1037 each carry an N-linked (GlcNAc...) asparagine glycan.

Belongs to the glycosyl hydrolase 65 family.

The protein resides in the secreted. It localises to the cell wall. The catalysed reaction is alpha,alpha-trehalose + H2O = alpha-D-glucose + beta-D-glucose. In terms of biological role, cell wall acid trehalase that catalyzes hydrolysis of the disaccharide trehalose and required for growth on trehalose as carbon source. Plays a role in dimorphic conversion and virulence. This chain is Cell wall acid trehalase ATC1 (ATC1), found in Candida albicans (strain SC5314 / ATCC MYA-2876) (Yeast).